We begin with the raw amino-acid sequence, 248 residues long: MRVDGRESNALRNIEVTPDYLMHPEGSVLIASGNTKVICSASVETKVPPFMRGEGRGWISAEYSMLPRATNTRNIRESSKGKVTGRTMEIQRLIGRALRAVVDLDALGERTIWLDCDVIQADGGTRTASITGAFIAMVMAIAKLDEAVPFAKFPVKDFLAATSVGVLEEGGTVLDLNYVEDSAAQVDMNIIMTGSGAFVELQGTGEEATFSETELAELIALGKKGISELIEIQKETLGDKVTARIKGE.

Phosphate contacts are provided by residues Arg-86 and 124-126 (GTR).

The protein belongs to the RNase PH family. As to quaternary structure, homohexameric ring arranged as a trimer of dimers.

The enzyme catalyses tRNA(n+1) + phosphate = tRNA(n) + a ribonucleoside 5'-diphosphate. Phosphorolytic 3'-5' exoribonuclease that plays an important role in tRNA 3'-end maturation. Removes nucleotide residues following the 3'-CCA terminus of tRNAs; can also add nucleotides to the ends of RNA molecules by using nucleoside diphosphates as substrates, but this may not be physiologically important. Probably plays a role in initiation of 16S rRNA degradation (leading to ribosome degradation) during starvation. In Listeria monocytogenes serotype 4b (strain CLIP80459), this protein is Ribonuclease PH.